The chain runs to 342 residues: Tetraacyldisaccharide 4'-kinase (342 aa).

68-75 is a binding site for ATP; the sequence is TVGGTGKT.

The protein belongs to the LpxK family.

The enzyme catalyses a lipid A disaccharide + ATP = a lipid IVA + ADP + H(+). It functions in the pathway glycolipid biosynthesis; lipid IV(A) biosynthesis; lipid IV(A) from (3R)-3-hydroxytetradecanoyl-[acyl-carrier-protein] and UDP-N-acetyl-alpha-D-glucosamine: step 6/6. Transfers the gamma-phosphate of ATP to the 4'-position of a tetraacyldisaccharide 1-phosphate intermediate (termed DS-1-P) to form tetraacyldisaccharide 1,4'-bis-phosphate (lipid IVA). The polypeptide is Tetraacyldisaccharide 4'-kinase (Burkholderia cenocepacia (strain HI2424)).